The following is a 247-amino-acid chain: Peptidyl-prolyl cis-trans isomerase FKBP17-2, chloroplastic (247 aa).

Residues 1-79 (MANLFTATAP…SSLTRRFGIG (79 aa)) constitute a chloroplast transit peptide. A disordered region spans residues 26–64 (QCYASSSNPPEPESSSPPPPPPPPQPLASQQKRKKNVET). Residues 34 to 51 (PPEPESSSPPPPPPPPQP) are compositionally biased toward pro residues. One can recognise a PPIase FKBP-type domain in the interval 141 to 243 (GDLVVIDLKG…EYIVEIDRVS (103 aa)).

Belongs to the FKBP-type PPIase family.

The protein localises to the plastid. Its subcellular location is the chloroplast thylakoid lumen. It carries out the reaction [protein]-peptidylproline (omega=180) = [protein]-peptidylproline (omega=0). In terms of biological role, PPIases accelerate the folding of proteins. It catalyzes the cis-trans isomerization of proline imidic peptide bonds in oligopeptides. The polypeptide is Peptidyl-prolyl cis-trans isomerase FKBP17-2, chloroplastic (FKBP17-2) (Arabidopsis thaliana (Mouse-ear cress)).